The following is a 197-amino-acid chain: Recombination protein RecR (197 aa).

The segment at 55-70 adopts a C4-type zinc-finger fold; sequence CVQCRDFTESEVCAIC. The region spanning 78–173 is the Toprim domain; it reads QQLCVVESPA…RPSRLAQGMP (96 aa).

It belongs to the RecR family.

In terms of biological role, may play a role in DNA repair. It seems to be involved in an RecBC-independent recombinational process of DNA repair. It may act with RecF and RecO. The polypeptide is Recombination protein RecR (Xanthomonas campestris pv. campestris (strain 8004)).